The sequence spans 1170 residues: Error-prone DNA polymerase (1170 aa).

Disordered stretches follow at residues 867–899 and 1129–1170; these read RGARSANPESRDSGFALRAPRNDNDRQIPLHND and IPHG…RDFH. Residues 886 to 899 are compositionally biased toward basic and acidic residues; the sequence is PRNDNDRQIPLHND.

The protein belongs to the DNA polymerase type-C family. DnaE2 subfamily.

Its subcellular location is the cytoplasm. The catalysed reaction is DNA(n) + a 2'-deoxyribonucleoside 5'-triphosphate = DNA(n+1) + diphosphate. In terms of biological role, DNA polymerase involved in damage-induced mutagenesis and translesion synthesis (TLS). It is not the major replicative DNA polymerase. This chain is Error-prone DNA polymerase, found in Bradyrhizobium sp. (strain ORS 278).